Reading from the N-terminus, the 251-residue chain is Phosphate import ATP-binding protein PstB 2 (251 aa).

Residues 5–246 enclose the ABC transporter domain; sequence ISAKDVHLSY…PKKQITSDYL (242 aa). Residue 37–44 coordinates ATP; the sequence is GPSGCGKS.

This sequence belongs to the ABC transporter superfamily. Phosphate importer (TC 3.A.1.7) family. The complex is composed of two ATP-binding proteins (PstB), two transmembrane proteins (PstC and PstA) and a solute-binding protein (PstS).

Its subcellular location is the cell membrane. It carries out the reaction phosphate(out) + ATP + H2O = ADP + 2 phosphate(in) + H(+). Part of the ABC transporter complex PstSACB involved in phosphate import. Responsible for energy coupling to the transport system. This chain is Phosphate import ATP-binding protein PstB 2, found in Lactobacillus acidophilus (strain ATCC 700396 / NCK56 / N2 / NCFM).